Consider the following 663-residue polypeptide: Oxytetracycline resistance protein (663 aa).

Residues 1–252 enclose the tr-type G domain; the sequence is MNKLNLGILA…GIRELLPSVH (252 aa). Residues 10 to 17, 74 to 78, and 128 to 131 each bind GTP; these read AHVDAGKT, DTPGH, and NKID.

This sequence belongs to the TRAFAC class translation factor GTPase superfamily. Classic translation factor GTPase family. TetM/TetO subfamily.

Abolishes the inhibitory effect of oxytetracycline on protein synthesis by a non-covalent modification of the ribosomes. This Streptomyces rimosus protein is Oxytetracycline resistance protein (otrA).